A 377-amino-acid polypeptide reads, in one-letter code: Succinyl-diaminopimelate desuccinylase (377 aa).

H66 contributes to the Zn(2+) binding site. D68 is a catalytic residue. D99 serves as a coordination point for Zn(2+). E133 serves as the catalytic Proton acceptor. The Zn(2+) site is built by E134, E162, and H348.

The protein belongs to the peptidase M20A family. DapE subfamily. Homodimer. The cofactor is Zn(2+). Co(2+) is required as a cofactor.

It carries out the reaction N-succinyl-(2S,6S)-2,6-diaminopimelate + H2O = (2S,6S)-2,6-diaminopimelate + succinate. It participates in amino-acid biosynthesis; L-lysine biosynthesis via DAP pathway; LL-2,6-diaminopimelate from (S)-tetrahydrodipicolinate (succinylase route): step 3/3. Functionally, catalyzes the hydrolysis of N-succinyl-L,L-diaminopimelic acid (SDAP), forming succinate and LL-2,6-diaminopimelate (DAP), an intermediate involved in the bacterial biosynthesis of lysine and meso-diaminopimelic acid, an essential component of bacterial cell walls. The chain is Succinyl-diaminopimelate desuccinylase from Alcanivorax borkumensis (strain ATCC 700651 / DSM 11573 / NCIMB 13689 / SK2).